The following is a 224-amino-acid chain: Deoxyribose-phosphate aldolase (224 aa).

The Proton donor/acceptor role is filled by Asp92. The active-site Schiff-base intermediate with acetaldehyde is the Lys155. Lys184 (proton donor/acceptor) is an active-site residue.

This sequence belongs to the DeoC/FbaB aldolase family. DeoC type 1 subfamily.

Its subcellular location is the cytoplasm. It catalyses the reaction 2-deoxy-D-ribose 5-phosphate = D-glyceraldehyde 3-phosphate + acetaldehyde. Its pathway is carbohydrate degradation; 2-deoxy-D-ribose 1-phosphate degradation; D-glyceraldehyde 3-phosphate and acetaldehyde from 2-deoxy-alpha-D-ribose 1-phosphate: step 2/2. Catalyzes a reversible aldol reaction between acetaldehyde and D-glyceraldehyde 3-phosphate to generate 2-deoxy-D-ribose 5-phosphate. This chain is Deoxyribose-phosphate aldolase, found in Clostridium perfringens (strain 13 / Type A).